A 151-amino-acid chain; its full sequence is Macrodomain Ter protein (151 aa).

This sequence belongs to the MatP family. In terms of assembly, homodimer.

Its subcellular location is the cytoplasm. Functionally, required for spatial organization of the terminus region of the chromosome (Ter macrodomain) during the cell cycle. Prevents early segregation of duplicated Ter macrodomains during cell division. Binds specifically to matS, which is a 13 bp signature motif repeated within the Ter macrodomain. The sequence is that of Macrodomain Ter protein from Yersinia enterocolitica serotype O:8 / biotype 1B (strain NCTC 13174 / 8081).